The chain runs to 185 residues: Elongation factor P (185 aa).

This sequence belongs to the elongation factor P family.

Its subcellular location is the cytoplasm. Its pathway is protein biosynthesis; polypeptide chain elongation. Its function is as follows. Involved in peptide bond synthesis. Stimulates efficient translation and peptide-bond synthesis on native or reconstituted 70S ribosomes in vitro. Probably functions indirectly by altering the affinity of the ribosome for aminoacyl-tRNA, thus increasing their reactivity as acceptors for peptidyl transferase. The protein is Elongation factor P of Bacillus pumilus (strain SAFR-032).